Consider the following 113-residue polypeptide: Fruiting body-specific class I hydrophobin fbh1 (113 aa).

The first 23 residues, 1–23 (MFSIRIATVVLAASAALRPPARI), serve as a signal peptide directing secretion. 4 cysteine pairs are disulfide-bonded: cysteine 33–cysteine 92, cysteine 40–cysteine 86, cysteine 41–cysteine 73, and cysteine 93–cysteine 106.

Belongs to the fungal hydrophobin family. In terms of assembly, self-assembles to form functional amyloid fibrils called rodlets. Self-assembly into fibrillar rodlets occurs spontaneously at hydrophobic:hydrophilic interfaces and the rodlets further associate laterally to form amphipathic monolayers.

The protein resides in the secreted. It localises to the cell wall. Its function is as follows. Aerial growth, conidiation, and dispersal of filamentous fungi in the environment rely upon a capability of their secreting small amphipathic proteins called hydrophobins (HPBs) with low sequence identity. Class I can self-assemble into an outermost layer of rodlet bundles on aerial cell surfaces, conferring cellular hydrophobicity that supports fungal growth, development and dispersal; whereas Class II form highly ordered films at water-air interfaces through intermolecular interactions but contribute nothing to the rodlet structure. Fbh1 is a fruiting body-specific class I hydrophobin that is involved in the growth rate and primordia formation. This Pleurotus ostreatus (Oyster mushroom) protein is Fruiting body-specific class I hydrophobin fbh1.